The primary structure comprises 448 residues: MTEISSMVISHKKAKVEEMESAWHGDLDGLLRNLYKHEYVYECVVLKTCNRVEIYVVSPKSSSVLFSFAKEMGASTHIIDFYGHDESLEHLLRLAGGLESMIVGEDQILGQIKDLYAYSKKAGTTGKILETAFEKAIQVGKRIRNETRINKGSVSIGSAAVDLAEDIFGGLTGKNVLVIGAGEIGVLVAKALAEKDIEAIYIANRTYKKAEEIAYELGGHAVRLDDIRDYLPGADVVISGTGAPHYILTREIVEEAIKCRERKLLLIDIANPRDIEESVVELENVELCNIDNLRVISERTLRMRKEEAKKAEAIIQEEIRLLNLQYKRQKADRLISELYKQVYDVRLRERQKAVNRLSSYHTIGDIETEVLDDLTRSIVNKILGEPTKVLRQAAELGNEEFLDVVSRVFCLDKEKVRFEKIKQAKFDQIKPGCTKEQAEVKEEYAVKD.

Substrate-binding positions include T48–R51, S100, E105–Q107, and Q111. The active-site Nucleophile is the C49. G180 to G185 is an NADP(+) binding site.

This sequence belongs to the glutamyl-tRNA reductase family. Homodimer.

It carries out the reaction (S)-4-amino-5-oxopentanoate + tRNA(Glu) + NADP(+) = L-glutamyl-tRNA(Glu) + NADPH + H(+). The protein operates within porphyrin-containing compound metabolism; protoporphyrin-IX biosynthesis; 5-aminolevulinate from L-glutamyl-tRNA(Glu): step 1/2. In terms of biological role, catalyzes the NADPH-dependent reduction of glutamyl-tRNA(Glu) to glutamate 1-semialdehyde (GSA). The protein is Glutamyl-tRNA reductase of Methanosarcina mazei (strain ATCC BAA-159 / DSM 3647 / Goe1 / Go1 / JCM 11833 / OCM 88) (Methanosarcina frisia).